The chain runs to 123 residues: Protein Wnt-7b (123 aa).

The O-palmitoleoyl serine; by PORCN moiety is linked to residue Ser-1. A disordered linker region spans residues 33-61; that stretch reads VEVVRASRLRQPTFLKIKQIKSYQKPMET. A disulfide bridge connects residues Cys-89 and Cys-104. An N-linked (GlcNAc...) asparagine glycan is attached at Asn-90.

The protein belongs to the Wnt family. Palmitoleoylation is required for efficient binding to frizzled receptors. Depalmitoleoylation leads to Wnt signaling pathway inhibition.

The protein localises to the secreted. It localises to the extracellular space. The protein resides in the extracellular matrix. Its function is as follows. Ligand for members of the frizzled family of seven transmembrane receptors that functions in the canonical Wnt/beta-catenin signaling pathway. Required for normal fusion of the chorion and the allantois during placenta development. Required for central nervous system (CNS) angiogenesis and blood-brain barrier regulation. In Anser caerulescens (Snow goose), this protein is Protein Wnt-7b (WNT7B).